A 120-amino-acid polypeptide reads, in one-letter code: UPF0102 protein CBU_1742 (120 aa).

It belongs to the UPF0102 family.

The protein is UPF0102 protein CBU_1742 of Coxiella burnetii (strain RSA 493 / Nine Mile phase I).